We begin with the raw amino-acid sequence, 203 residues long: Probable chemoreceptor glutamine deamidase CheD (203 aa).

It belongs to the CheD family.

It catalyses the reaction L-glutaminyl-[protein] + H2O = L-glutamyl-[protein] + NH4(+). In terms of biological role, probably deamidates glutamine residues to glutamate on methyl-accepting chemotaxis receptors (MCPs), playing an important role in chemotaxis. The protein is Probable chemoreceptor glutamine deamidase CheD of Herminiimonas arsenicoxydans.